The primary structure comprises 279 residues: Phycobilisome rod-core linker polypeptide CpcG1 (279 aa).

Residues 11 to 189 form the PBS-linker domain; the sequence is TTQNQRVEGY…YWRNRLLEQF (179 aa).

Belongs to the phycobilisome linker protein family. The phycobilisome is a hemidiscoidal structure that is composed of two distinct substructures: a core complex and a number of rods radiating from the core.

The protein localises to the cellular thylakoid membrane. Rod-core linker protein required for attachment of phycocyanin to allophycocyanin in cores of phycobilisomes. In terms of biological role, linker polypeptides determine the state of aggregation and the location of the disk-shaped phycobiliprotein units within the phycobilisome and modulate their spectroscopic properties in order to mediate a directed and optimal energy transfer. The chain is Phycobilisome rod-core linker polypeptide CpcG1 (cpcG1) from Mastigocladus laminosus (Fischerella sp.).